Reading from the N-terminus, the 334-residue chain is NmrA-like family domain-containing oxidoreductase lnaB (334 aa).

Residues 12-17 (GGTGKQ), 38-42 (RNAQS), 59-60 (DG), 80-82 (INS), K138, and 162-165 (FLEN) contribute to the NADP(+) site.

It belongs to the NmrA-type oxidoreductase family.

The protein operates within secondary metabolite biosynthesis. NmrA-like family domain-containing oxidoreductase; part of the lna gene cluster that mediates the biosynthesis of diastereomeric piperazines. Lna and lnb clusters encode sets of enzymes that produce overlapping sets of previously undescribed metabolites such as piperazinomycin-like metabolites or morpholine. The lna and lnb biosynthetic pathways appear to be part of a signaling network that controls the formation of sclerotia, a resilient overwintering structure. One primary function of the non-canonical nonribosomal peptide synthetases lnaA and lnbA consists in the reduction of L-tyrosine. The presence in the clusters of tailoring enzymes such as the oxidoreductases lnaB, lnbB, lnaE or lnbE, as well as of the cytochrome P450 monooxygenases lnaC, lnaD, or lnbC, might explain formation of various diastereomeric piperazines. This is NmrA-like family domain-containing oxidoreductase lnaB from Aspergillus flavus (strain ATCC 200026 / FGSC A1120 / IAM 13836 / NRRL 3357 / JCM 12722 / SRRC 167).